We begin with the raw amino-acid sequence, 147 residues long: Large ribosomal subunit protein uL13 (147 aa).

Belongs to the universal ribosomal protein uL13 family. Part of the 50S ribosomal subunit.

In terms of biological role, this protein is one of the early assembly proteins of the 50S ribosomal subunit, although it is not seen to bind rRNA by itself. It is important during the early stages of 50S assembly. This Limosilactobacillus fermentum (strain NBRC 3956 / LMG 18251) (Lactobacillus fermentum) protein is Large ribosomal subunit protein uL13.